A 210-amino-acid chain; its full sequence is Ribonuclease HII (210 aa).

The region spanning 18–210 (GLIAGVDEVG…FKPVKALLGL (193 aa)) is the RNase H type-2 domain. Residues Asp-24, Glu-25, and Asp-116 each contribute to the a divalent metal cation site.

The protein belongs to the RNase HII family. Mn(2+) serves as cofactor. Requires Mg(2+) as cofactor.

It localises to the cytoplasm. The catalysed reaction is Endonucleolytic cleavage to 5'-phosphomonoester.. Functionally, endonuclease that specifically degrades the RNA of RNA-DNA hybrids. The sequence is that of Ribonuclease HII from Shewanella baltica (strain OS223).